We begin with the raw amino-acid sequence, 193 residues long: Adenine phosphoribosyltransferase (193 aa).

The protein belongs to the purine/pyrimidine phosphoribosyltransferase family. Homodimer.

The protein resides in the cytoplasm. It carries out the reaction AMP + diphosphate = 5-phospho-alpha-D-ribose 1-diphosphate + adenine. The protein operates within purine metabolism; AMP biosynthesis via salvage pathway; AMP from adenine: step 1/1. Its function is as follows. Catalyzes a salvage reaction resulting in the formation of AMP, that is energically less costly than de novo synthesis. This chain is Adenine phosphoribosyltransferase, found in Chromobacterium violaceum (strain ATCC 12472 / DSM 30191 / JCM 1249 / CCUG 213 / NBRC 12614 / NCIMB 9131 / NCTC 9757 / MK).